The sequence spans 232 residues: Orotidine 5'-phosphate decarboxylase (232 aa).

Substrate-binding positions include D13, K35, 62–71, T122, R182, Q191, G211, and R212; that span reads DLKFHDIPNT. K64 acts as the Proton donor in catalysis.

The protein belongs to the OMP decarboxylase family. Type 1 subfamily. Homodimer.

It catalyses the reaction orotidine 5'-phosphate + H(+) = UMP + CO2. The protein operates within pyrimidine metabolism; UMP biosynthesis via de novo pathway; UMP from orotate: step 2/2. Functionally, catalyzes the decarboxylation of orotidine 5'-monophosphate (OMP) to uridine 5'-monophosphate (UMP). The protein is Orotidine 5'-phosphate decarboxylase of Pseudomonas savastanoi pv. phaseolicola (strain 1448A / Race 6) (Pseudomonas syringae pv. phaseolicola (strain 1448A / Race 6)).